A 156-amino-acid polypeptide reads, in one-letter code: ATP synthase subunit b (156 aa).

Residues 7 to 29 (LIGQSVAFLIFVWFCMKFVWPPL) traverse the membrane as a helical segment.

The protein belongs to the ATPase B chain family. F-type ATPases have 2 components, F(1) - the catalytic core - and F(0) - the membrane proton channel. F(1) has five subunits: alpha(3), beta(3), gamma(1), delta(1), epsilon(1). F(0) has three main subunits: a(1), b(2) and c(10-14). The alpha and beta chains form an alternating ring which encloses part of the gamma chain. F(1) is attached to F(0) by a central stalk formed by the gamma and epsilon chains, while a peripheral stalk is formed by the delta and b chains.

It localises to the cell inner membrane. In terms of biological role, f(1)F(0) ATP synthase produces ATP from ADP in the presence of a proton or sodium gradient. F-type ATPases consist of two structural domains, F(1) containing the extramembraneous catalytic core and F(0) containing the membrane proton channel, linked together by a central stalk and a peripheral stalk. During catalysis, ATP synthesis in the catalytic domain of F(1) is coupled via a rotary mechanism of the central stalk subunits to proton translocation. Functionally, component of the F(0) channel, it forms part of the peripheral stalk, linking F(1) to F(0). The protein is ATP synthase subunit b of Shewanella denitrificans (strain OS217 / ATCC BAA-1090 / DSM 15013).